The primary structure comprises 96 residues: Neutrophil defensin 1 (96 aa).

A signal peptide spans 1 to 19 (MRTLVILAAILLVALQAQA). Residues 20 to 66 (EPLQARTDEATAAQEQIPTDNPEVVVSLAWDESLAPKDSVPGLRKNM) constitute a propeptide that is removed on maturation. 3 disulfide bridges follow: Cys68-Cys96, Cys70-Cys85, and Cys75-Cys95. Tyr87 carries the phosphotyrosine modification.

As to quaternary structure, tetramer. Dimer. Interacts with RETN. Post-translationally, ADP-ribosylation drastically reduces cytotoxic and antibacterial activities, and enhances IL8 production.

The protein resides in the secreted. Functionally, effector molecule of the innate immune system that acts via antibiotic-like properties against a broad array of infectious agents including bacteria, fungi, and viruses or by promoting the activation and maturation of some APCs. Interacts with the essential precursor of cell wall synthesis lipid II to inhibit bacterial cell wall synthesis. Inhibits adenovirus infection via inhibition of viral disassembly at the vertex region, thereby restricting the release of internal capsid protein pVI, which is required for endosomal membrane penetration during cell entry. In addition, interaction with adenovirus capsid leads to the redirection of viral particles to TLR4 thereby promoting a NLRP3-mediated inflammasome response and interleukin 1-beta (IL-1beta) release. Induces the production of proinflammatory cytokines including type I interferon (IFN) in plasmacytoid dendritic cells (pDCs) by triggering the degradation of NFKBIA and nuclear translocation of IRF1, both of which are required for activation of pDCs. The polypeptide is Neutrophil defensin 1 (Macaca mulatta (Rhesus macaque)).